We begin with the raw amino-acid sequence, 572 residues long: MEVEKLALKYALINAIEHDGKANPKAVIGKILGENPELRKKAREIVPIVNKIVEEVNTLSLEEQKKKLEEIYPEYFMEGTKKEKEEKKQLPPLPKAEKGKVVTRFAPNPDGAFHLGNARAAILSYEYAKMYDGKFILRFDDTDPKVKRPELIFYDMIIEDLEWLGIKPDEIVYASDRLEIYYKYAEELIKMGKAYVCTCPPDEFRKLRDQGIACPHRDEPVEVQLERWKKMLNGEYREGEAVVRIKTDLNHPNPAVRDWPALRIVDEPNHPRTGNKYRVWPLYNFASAIDDHELGVTHIFRGQEHSENETRQRYIYEYFGWEYPVTVHHGRLSIEGVILSKSKTRKGIEEGKYLGWDDPRLGTIRALRRRGILPEAIRELILEVGLKKSDATVSWDNLAAINRKLVDPIANRYFFVADPIPMYIEEAEEFEAKIPLHPDHPERGYRVLKFEPGKPIYVSKDDLSLLKPGGFIRLKDLFNVEILEVGDTIKARFHSHEYEVARKNKWRMIHWVPEGKECEVIIPEGEELIIRKGLLEKNANVKEGEIVQFERFGFVRIDKIENDKVIAIYAHK.

The 'HIGH' region motif lies at 107-117; it reads PNPDGAFHLGN.

This sequence belongs to the class-I aminoacyl-tRNA synthetase family. Glutamate--tRNA ligase type 2 subfamily.

The protein localises to the cytoplasm. The catalysed reaction is tRNA(Glu) + L-glutamate + ATP = L-glutamyl-tRNA(Glu) + AMP + diphosphate. In terms of biological role, catalyzes the attachment of glutamate to tRNA(Glu) in a two-step reaction: glutamate is first activated by ATP to form Glu-AMP and then transferred to the acceptor end of tRNA(Glu). The polypeptide is Glutamate--tRNA ligase (Pyrococcus furiosus (strain ATCC 43587 / DSM 3638 / JCM 8422 / Vc1)).